A 652-amino-acid chain; its full sequence is MAPPRNVVKIAVQMRDAIPQLIQLDQAKPLAAVLKEVCDAWSLPHSERYALQFADGHRRYITENNRMEIKNGSILCLSTAPDREAERLLRGLQSESREGRREALRHLLLLAPDLTFAREVISRDGLQRLGTIIEDGDDLGEVLALALRAFLELMEHGVVSWETLSIPFVRKVVCYVNMNLMDASVQPLALGLLENVTLSSPTLGQLVKSEVPLDRLLVHLQVMNQQLQTKAMALLTALLQGATPAERKHMLDYLWQRNLRQFIYKNIIHSAAPLGDEMAHHLYVLQALMLGLLEPRMRTPLDPYSQEQREQLQALRQAAFEPEGESVGAGLSADRRRSLCAREFRKLGFSNSNPAQDLERVPPGLLALDNMLYFSRQAPSAYSRFVLENSSREDKHECPFARSSIQLTVLLCDLLHVGEPCSETAQDFSPMFFGQDQSFHELFCVSIQLLNKTWKEMRATQEDFDKVMQVVREQLARTLALKPSSLELFRTKVNALTYGEVLRLRQTERLHQEGTLAPPILELREKLKPELMGLIRQQRLLRLCEGTLFHKISSRRRQDKLWFCCLSPNHKVLQYGDVEEGVGPPTPESLPEQLPVADIRALLTGKDCPHVREKGSGKQNKDVCELAFSVSYDHGEEEAYLNFIAPSKREMG.

The ELMO domain maps to 307 to 479; that stretch reads EQREQLQALR…VVREQLARTL (173 aa).

Probably interacts directly with the SH3-domain of DOCK1 via its SH3-binding site. Part of a complex with DOCK1 and RAC1. Interacts with ADGRB3.

It localises to the cytoplasm. In terms of biological role, involved in cytoskeletal rearrangements required for phagocytosis of apoptotic cells and cell motility. Acts in association with DOCK1 and CRK. Was initially proposed to be required in complex with DOCK1 to activate Rac Rho small GTPases. May enhance the guanine nucleotide exchange factor (GEF) activity of DOCK1. This Bos taurus (Bovine) protein is Engulfment and cell motility protein 3 (ELMO3).